Here is a 96-residue protein sequence, read N- to C-terminus: Beta-defensin 20 (96 aa).

The first 21 residues, 1-21 (MKLLQVLLVLLFVALADGAQP), serve as a signal peptide directing secretion. 3 cysteine pairs are disulfide-bonded: Cys-24–Cys-52, Cys-32–Cys-46, and Cys-36–Cys-53.

This sequence belongs to the beta-defensin family.

The protein localises to the secreted. Its function is as follows. Has antibacterial activity. The sequence is that of Beta-defensin 20 (Defb20) from Mus musculus (Mouse).